The sequence spans 193 residues: Chromophore lyase CpcS/CpeS 4 (193 aa).

Belongs to the CpcS/CpeS biliprotein lyase family.

Its function is as follows. Covalently attaches a chromophore to Cys residue(s) of phycobiliproteins. The protein is Chromophore lyase CpcS/CpeS 4 of Trichodesmium erythraeum (strain IMS101).